Reading from the N-terminus, the 132-residue chain is uncharacterized protein (132 aa).

Positions H39 to T93 are disordered. Residues L56–G72 are compositionally biased toward basic and acidic residues.

This is an uncharacterized protein from Homo sapiens (Human).